A 252-amino-acid polypeptide reads, in one-letter code: tRNA (guanine-N(1)-)-methyltransferase (252 aa).

Residues Gly-116 and 135–140 (LGDYVL) each bind S-adenosyl-L-methionine.

The protein belongs to the RNA methyltransferase TrmD family. Homodimer.

The protein resides in the cytoplasm. It catalyses the reaction guanosine(37) in tRNA + S-adenosyl-L-methionine = N(1)-methylguanosine(37) in tRNA + S-adenosyl-L-homocysteine + H(+). In terms of biological role, specifically methylates guanosine-37 in various tRNAs. This chain is tRNA (guanine-N(1)-)-methyltransferase, found in Limosilactobacillus reuteri (strain DSM 20016) (Lactobacillus reuteri).